Consider the following 338-residue polypeptide: 1-aminocyclopropane-1-carboxylate deaminase (338 aa).

An N6-(pyridoxal phosphate)lysine modification is found at Lys51. Ser78 serves as the catalytic Nucleophile.

Belongs to the ACC deaminase/D-cysteine desulfhydrase family. Homotrimer. Requires pyridoxal 5'-phosphate as cofactor.

It catalyses the reaction 1-aminocyclopropane-1-carboxylate + H2O = 2-oxobutanoate + NH4(+). In terms of biological role, catalyzes a cyclopropane ring-opening reaction, the irreversible conversion of 1-aminocyclopropane-1-carboxylate (ACC) to ammonia and alpha-ketobutyrate. Allows growth on ACC as a nitrogen source. The chain is 1-aminocyclopropane-1-carboxylate deaminase from Burkholderia cenocepacia (strain HI2424).